A 456-amino-acid polypeptide reads, in one-letter code: Mitochondrial import inner membrane translocase subunit TIM50 (456 aa).

Residues 1 to 22 constitute a mitochondrion transit peptide; that stretch reads MSLSKLSQKCFSRHHARTFIRF. The Mitochondrial matrix segment spans residues 23–171; it reads SSSDFQSLLG…RRKRMERNTR (149 aa). 2 disordered regions span residues 101–120 and 132–165; these read ETEK…AIDE and EEAA…RRKR. The segment covering 137 to 153 has biased composition (polar residues); that stretch reads SKTSAPSGSSGDNNDQP. The helical transmembrane segment at 172–192 threads the bilayer; that stretch reads IGGYVLLGGSVIGFISFCFYY. Topologically, residues 193–456 are mitochondrial intermembrane; the sequence is GRAQRDEAGN…LFGFRRHASA (264 aa). The 145-residue stretch at 247-391 folds into the FCP1 homology domain; it reads YLQPKYTIVI…VDLAELLKTI (145 aa).

The protein belongs to the TIM50 family. As to quaternary structure, component of the TIM23 complex at least composed of tim-23, tim-17 and tim-50.

Its subcellular location is the mitochondrion inner membrane. Its function is as follows. Essential component of the TIM23 complex, a complex that mediates the translocation of transit peptide-containing proteins across the mitochondrial inner membrane. The chain is Mitochondrial import inner membrane translocase subunit TIM50 (scpl-4) from Caenorhabditis briggsae.